The chain runs to 324 residues: tRNA pseudouridine synthase B (324 aa).

Catalysis depends on D49, which acts as the Nucleophile. The segment at 87–107 (RSTDDLEGQPTKTSDKRPSRE) is disordered.

The protein belongs to the pseudouridine synthase TruB family. Type 1 subfamily.

It carries out the reaction uridine(55) in tRNA = pseudouridine(55) in tRNA. Its function is as follows. Responsible for synthesis of pseudouridine from uracil-55 in the psi GC loop of transfer RNAs. This Brucella abortus (strain 2308) protein is tRNA pseudouridine synthase B.